Consider the following 81-residue polypeptide: ATP synthase subunit c, chloroplastic (81 aa).

The next 2 membrane-spanning stretches (helical) occupy residues 3–23 and 57–77; these read PLISAASVIAAGLSVGLASIG and LAFMEALTIYGLVVALALLFA.

Belongs to the ATPase C chain family. F-type ATPases have 2 components, F(1) - the catalytic core - and F(0) - the membrane proton channel. F(1) has five subunits: alpha(3), beta(3), gamma(1), delta(1), epsilon(1). F(0) has four main subunits: a(1), b(1), b'(1) and c(10-14). The alpha and beta chains form an alternating ring which encloses part of the gamma chain. F(1) is attached to F(0) by a central stalk formed by the gamma and epsilon chains, while a peripheral stalk is formed by the delta, b and b' chains.

The protein localises to the plastid. It localises to the chloroplast thylakoid membrane. In terms of biological role, f(1)F(0) ATP synthase produces ATP from ADP in the presence of a proton or sodium gradient. F-type ATPases consist of two structural domains, F(1) containing the extramembraneous catalytic core and F(0) containing the membrane proton channel, linked together by a central stalk and a peripheral stalk. During catalysis, ATP synthesis in the catalytic domain of F(1) is coupled via a rotary mechanism of the central stalk subunits to proton translocation. Key component of the F(0) channel; it plays a direct role in translocation across the membrane. A homomeric c-ring of between 10-14 subunits forms the central stalk rotor element with the F(1) delta and epsilon subunits. The sequence is that of ATP synthase subunit c, chloroplastic from Pinus koraiensis (Korean pine).